The chain runs to 90 residues: Acylphosphatase (90 aa).

Residues 4–90 enclose the Acylphosphatase-like domain; sequence TRRVRFYGRV…TEFQDFQIKR (87 aa). Catalysis depends on residues arginine 19 and asparagine 37.

It belongs to the acylphosphatase family.

It catalyses the reaction an acyl phosphate + H2O = a carboxylate + phosphate + H(+). This is Acylphosphatase (acyP) from Thermoplasma volcanium (strain ATCC 51530 / DSM 4299 / JCM 9571 / NBRC 15438 / GSS1).